A 419-amino-acid polypeptide reads, in one-letter code: Serine--tRNA ligase (419 aa).

The segment at 45 to 66 is disordered; sequence ADSLRAEQKAASKSVGGASPEE. 226-228 provides a ligand contact to L-serine; it reads TSE. ATP is bound by residues 257–259 and valine 273; that span reads RRE. Glutamate 280 serves as a coordination point for L-serine. ATP is bound at residue 344–347; sequence ELTS. Threonine 379 provides a ligand contact to L-serine.

This sequence belongs to the class-II aminoacyl-tRNA synthetase family. Type-1 seryl-tRNA synthetase subfamily. As to quaternary structure, homodimer. The tRNA molecule binds across the dimer.

It localises to the cytoplasm. The enzyme catalyses tRNA(Ser) + L-serine + ATP = L-seryl-tRNA(Ser) + AMP + diphosphate + H(+). It catalyses the reaction tRNA(Sec) + L-serine + ATP = L-seryl-tRNA(Sec) + AMP + diphosphate + H(+). It functions in the pathway aminoacyl-tRNA biosynthesis; selenocysteinyl-tRNA(Sec) biosynthesis; L-seryl-tRNA(Sec) from L-serine and tRNA(Sec): step 1/1. Its function is as follows. Catalyzes the attachment of serine to tRNA(Ser). Is also able to aminoacylate tRNA(Sec) with serine, to form the misacylated tRNA L-seryl-tRNA(Sec), which will be further converted into selenocysteinyl-tRNA(Sec). The polypeptide is Serine--tRNA ligase (Mycobacterium ulcerans (strain Agy99)).